Here is a 100-residue protein sequence, read N- to C-terminus: Urease subunit gamma (100 aa).

Belongs to the urease gamma subunit family. Heterotrimer of UreA (gamma), UreB (beta) and UreC (alpha) subunits. Three heterotrimers associate to form the active enzyme.

The protein resides in the cytoplasm. It catalyses the reaction urea + 2 H2O + H(+) = hydrogencarbonate + 2 NH4(+). The protein operates within nitrogen metabolism; urea degradation; CO(2) and NH(3) from urea (urease route): step 1/1. The polypeptide is Urease subunit gamma (Acetivibrio thermocellus (strain ATCC 27405 / DSM 1237 / JCM 9322 / NBRC 103400 / NCIMB 10682 / NRRL B-4536 / VPI 7372) (Clostridium thermocellum)).